Consider the following 108-residue polypeptide: Circadian clock oscillator protein KaiB (108 aa).

It belongs to the KaiB family. In terms of assembly, homodimer, interacts with KaiC. The KaiABC complex composition changes during the circadian cycle to control KaiC phosphorylation. Complexes KaiC(6), KaiA(2-4):KaiC(6), KaiB(6):KaiC(6) and KaiC(6):KaiB(6):KaiA(12) are among the most important forms, many form cooperatively. Undergoes a major conformational rearrangment; in the free state forms homotetramers as a dimer of dimers. When bound to the CI domain of KaiC switches to a monomeric thioredoxin-fold (KaiB(fs)). KaiB(fs) binds CikA, leading it to dephosphorylate phospho-RpaA.

Its function is as follows. Key component of the KaiABC oscillator complex, which constitutes the main circadian regulator in cyanobacteria. Complex composition changes during the circadian cycle to control KaiC phosphorylation. KaiA stimulates KaiC autophosphorylation, while KaiB sequesters KaiA, leading to KaiC autodephosphorylation. Phospho-Ser-431 KaiC accumulation triggers binding of KaiB to form the KaiB(6):KaiC(6) complex, leading to changes in output regulators CikA and SasA. KaiB switches to a thioredoxin-like fold (KaiB(fs)) when bound to KaiC. KaiB(6):KaiC(6) formation exposes a site for KaiA binding that sequesters KaiA from KaiC, making the KaiC(6):KaiB(6):KaiA(12) complex that results in KaiC autodephosphorylation. Functionally, a metamorphic protein which reversibly switches between an inactive tetrameric fold and a rare, thioredoxin-like monomeric fold (KaiB(fs)). KaiB(fs) binds phospho-KaiC, KaiA and CikA. KaiA and CikA compete for binding to KaiB(fs), and KaiB(fs) and SasA compete for binding to KaiC, thus the clock oscillator and output signal pathway are tightly coupled. In Nostoc sp. (strain PCC 7120 / SAG 25.82 / UTEX 2576), this protein is Circadian clock oscillator protein KaiB.